A 217-amino-acid chain; its full sequence is Ras-related protein Rab11B (217 aa).

21–28 (GDSGVGKS) provides a ligand contact to GTP. Residues 43–51 (SKSTIGVEF) carry the Effector region motif. Residues 69–73 (DTAGQ) and 127–130 (NKAD) each bind GTP. Residues C214 and C215 are each lipidated (S-geranylgeranyl cysteine).

Belongs to the small GTPase superfamily. Rab family.

The protein localises to the cell membrane. The polypeptide is Ras-related protein Rab11B (RAB11B) (Nicotiana tabacum (Common tobacco)).